Reading from the N-terminus, the 357-residue chain is UPF0283 membrane protein HSM_0945 (357 aa).

The next 3 helical transmembrane spans lie at 67–87 (LMAT…QWLV), 96–116 (IAFV…GTII), and 213–233 (AVES…MFFI).

This sequence belongs to the UPF0283 family.

The protein resides in the cell inner membrane. The polypeptide is UPF0283 membrane protein HSM_0945 (Histophilus somni (strain 2336) (Haemophilus somnus)).